The primary structure comprises 365 residues: Histidinol-phosphate aminotransferase (365 aa).

An N6-(pyridoxal phosphate)lysine modification is found at Lys-227.

This sequence belongs to the class-II pyridoxal-phosphate-dependent aminotransferase family. Histidinol-phosphate aminotransferase subfamily. Homodimer. Pyridoxal 5'-phosphate is required as a cofactor.

It catalyses the reaction L-histidinol phosphate + 2-oxoglutarate = 3-(imidazol-4-yl)-2-oxopropyl phosphate + L-glutamate. It functions in the pathway amino-acid biosynthesis; L-histidine biosynthesis; L-histidine from 5-phospho-alpha-D-ribose 1-diphosphate: step 7/9. The sequence is that of Histidinol-phosphate aminotransferase from Polaromonas naphthalenivorans (strain CJ2).